The sequence spans 78 residues: Delta-conotoxin TxVIA (78 aa).

Residues M1–A22 form the signal peptide. The propeptide occupies D23–N49. 3 disulfide bridges follow: C53–C68, C60–C72, and C67–C77. A Methionine sulfoxide; partial modification is found at M59.

It belongs to the conotoxin O1 superfamily. Expressed by the venom duct. Is present in all duct parts with a highest content in part 4 (distal part near the pharynx).

Its subcellular location is the secreted. Delta-conotoxins bind to site 6 of voltage-gated sodium channels (Nav) and inhibit the inactivation process. Binding of this toxin is strongly calcium-dependent but not voltage-dependent. The binding site is most likely on the extracellular side of the sodium channel. Binds receptor sites on both mollusk and rat central nervous system, but despite its high affinity binding to rat sodium channel, it has no functional effect in vivo and in vitro on it. Also has no effect on Gambusia fish. Is important in mollusk for the paralysis of the prey. Upon injection of the peptide, a subordinate lobster assumes an exaggerated dominant posture (of a 'King-Kong' lobster!). In Conus textile (Cloth-of-gold cone), this protein is Delta-conotoxin TxVIA.